Here is a 601-residue protein sequence, read N- to C-terminus: Zinc finger protein 37 (601 aa).

The 70-residue stretch at 1–70 (MATPEPAESD…VRANKNSSSS (70 aa)) folds into the KRAB domain. Residue Thr3 is modified to Phosphothreonine. The residue at position 9 (Ser9) is a Phosphoserine. The segment covering 30–43 (ETCSNPASMGNQDP) has biased composition (polar residues). Positions 30–254 (ETCSNPASMG…SKSDKAPGSG (225 aa)) are disordered. Positions 60–70 (SVRANKNSSSS) are enriched in low complexity. Residues 77 to 88 (TGTSAKVQQDGA) are compositionally biased toward polar residues. 3 stretches are compositionally biased toward basic and acidic residues: residues 115 to 136 (KSSE…PSEK), 164 to 174 (KKPDTANEYRK), and 183 to 238 (VNRD…EKRK). The segment at 257–279 (YECNQCGKVLSHKQGLLDHQRTH) adopts a C2H2-type 1 zinc-finger fold. The C2H2-type 2; atypical zinc finger occupies 285 to 303 (YECYECGIAFSQKSHLVVH). 10 C2H2-type zinc fingers span residues 314–337 (YECV…RISH), 343–365 (YKCN…IRSH), 371–393 (YECK…VRTH), 399–421 (YECN…MRIH), 427–449 (FECT…QRTH), 455–477 (YKCK…MRTH), 483–505 (FECN…QRVH), 511–533 (YECV…QRTH), 539–561 (FECY…QRSH), and 570–592 (YECV…MKTH).

The protein belongs to the krueppel C2H2-type zinc-finger protein family. Expressed in testes, brain, kidney, spleen, thymus, lung, and at low levels in liver.

The protein localises to the nucleus. In terms of biological role, may be involved in transcriptional regulation. The chain is Zinc finger protein 37 (Zfp37) from Rattus norvegicus (Rat).